The chain runs to 549 residues: Glucose-6-phosphate isomerase (549 aa).

Catalysis depends on Glu-355, which acts as the Proton donor. Catalysis depends on residues His-386 and Lys-514.

Belongs to the GPI family.

It localises to the cytoplasm. The catalysed reaction is alpha-D-glucose 6-phosphate = beta-D-fructose 6-phosphate. It functions in the pathway carbohydrate biosynthesis; gluconeogenesis. Its pathway is carbohydrate degradation; glycolysis; D-glyceraldehyde 3-phosphate and glycerone phosphate from D-glucose: step 2/4. Catalyzes the reversible isomerization of glucose-6-phosphate to fructose-6-phosphate. The sequence is that of Glucose-6-phosphate isomerase from Pectobacterium carotovorum subsp. carotovorum (strain PC1).